Consider the following 252-residue polypeptide: Ribosome maturation factor RimP (252 aa).

The tract at residues 188-252 is disordered; that stretch reads QGAAPGTEGG…PAAGPGAQDE (65 aa). Basic residues predominate over residues 208 to 224; it reads ARRPHQPKPKKAKKKGP.

The protein belongs to the RimP family.

The protein resides in the cytoplasm. Its function is as follows. Required for maturation of 30S ribosomal subunits. This chain is Ribosome maturation factor RimP, found in Rhodospirillum centenum (strain ATCC 51521 / SW).